Here is a 400-residue protein sequence, read N- to C-terminus: CinA-like protein (400 aa).

This sequence belongs to the CinA family.

This Escherichia coli (strain 55989 / EAEC) protein is CinA-like protein.